The chain runs to 405 residues: Diaminopimelate decarboxylase (405 aa).

Lys46 bears the N6-(pyridoxal phosphate)lysine mark. Pyridoxal 5'-phosphate is bound by residues Gly225 and 259–262; that span reads EPGR. Substrate is bound by residues Arg262, Arg298, and Tyr302. Residue Cys329 is the Proton donor of the active site. Residues Glu330 and Tyr358 each contribute to the substrate site. Tyr358 provides a ligand contact to pyridoxal 5'-phosphate.

It belongs to the Orn/Lys/Arg decarboxylase class-II family. LysA subfamily. Homodimer. It depends on pyridoxal 5'-phosphate as a cofactor.

It catalyses the reaction meso-2,6-diaminopimelate + H(+) = L-lysine + CO2. It participates in amino-acid biosynthesis; L-lysine biosynthesis via DAP pathway; L-lysine from DL-2,6-diaminopimelate: step 1/1. In terms of biological role, specifically catalyzes the decarboxylation of meso-diaminopimelate (meso-DAP) to L-lysine. In Helicobacter pylori (strain J99 / ATCC 700824) (Campylobacter pylori J99), this protein is Diaminopimelate decarboxylase.